Consider the following 428-residue polypeptide: GTPase Obg (428 aa).

The 158-residue stretch at 1–158 (MFVDQVQVEV…RFIKLELKVL (158 aa)) folds into the Obg domain. An OBG-type G domain is found at 159–333 (ADVGLVGFPS…LMHKTAEVLK (175 aa)). Residues 165–172 (GFPSVGKS), 190–194 (FTTLV), 212–215 (DLPG), 282–285 (TKMD), and 314–316 (SSL) each bind GTP. Mg(2+) is bound by residues serine 172 and threonine 192. Residues 350–428 (YKYQPEPALK…IDDFTFEFVE (79 aa)) form the OCT domain.

It belongs to the TRAFAC class OBG-HflX-like GTPase superfamily. OBG GTPase family. As to quaternary structure, monomer. Mg(2+) is required as a cofactor.

Its subcellular location is the cytoplasm. Its function is as follows. An essential GTPase which binds GTP, GDP and possibly (p)ppGpp with moderate affinity, with high nucleotide exchange rates and a fairly low GTP hydrolysis rate. Plays a role in control of the cell cycle, stress response, ribosome biogenesis and in those bacteria that undergo differentiation, in morphogenesis control. This Lacticaseibacillus paracasei (strain ATCC 334 / BCRC 17002 / CCUG 31169 / CIP 107868 / KCTC 3260 / NRRL B-441) (Lactobacillus paracasei) protein is GTPase Obg.